A 110-amino-acid chain; its full sequence is uncharacterized protein (110 aa).

The disordered stretch occupies residues 38 to 62 (SVQQNARAEEAEAAAPPAEEDSLPD).

This is an uncharacterized protein from Mus musculus (Mouse).